A 221-amino-acid polypeptide reads, in one-letter code: Putative efflux system component YhbJ (221 aa).

Residues 17–37 traverse the membrane as a helical segment; the sequence is LILTNIIGLIVVLAIIAGGAY.

The protein belongs to the membrane fusion protein (MFP) (TC 8.A.1) family.

It localises to the cell membrane. The sequence is that of Putative efflux system component YhbJ (yhbJ) from Bacillus subtilis (strain 168).